Consider the following 805-residue polypeptide: MWDQGGQPWQQWPLNQQQWMQSFQHQQDPSQIDWAALAQAWIAQREASGQQSMVEQPPGMMPNGQDMSTMESGPNNHGNFQGDSNFNRMWQPEWGMHQQPPHPPPDQPWMPPTPGPMDIVPPSEDSNSQDSGEFAPDNRHIFNQNNHNFGGPPDNFAVGPVNQFDYQHGAAFGPPQGGFHPPYWQPGPPGPPAPPQNRRERPSSFRDRQRSPIALPVKQEPPQIDAVKRRTLPAWIREGLEKMEREKQKKLEKERMEQQRSQLSKKEKKATEDAEGGDGPRLPQRSKFDSDEEEEDTENVEAASSGKVTRSPSPVPQEEHSDPEMTEEEKEYQMMLLTKMLLTEILLDVTDEEIYYVAKDAHRKATKAPAKQLAQSSALASLTGLGGLGGYGSGDSEDERSDRGSESSDTDDEELRHRIRQKQEAFWRKEKEQQLLHDKQMEEEKQQTERVTKEMNEFIHKEQNSLSLLEAREADGDVVNEKKRTPNETTSVLEPKKEHKEKEKQGRSRSGSSSSGSSSSNSRTSSTSSTVSSSSYSSSSGSSRTSSRSSSPKRKKRHSRSRSPTIKARRSRSRSYSRRIKIESNRARVKIRDRRRSNRNSIERERRRNRSPSRERRRSRSRSRDRRTNRASRSRSRDRRKIDDQRGNLSGNSHKHKGEAKEQERKKERSRSIDKDRKKKDKEREREQDKRKEKQKREEKDFKFSSQDDRLKRKRESERTFSRSGSISVKIIRHDSRQDSKKSTTKDSKKHSGSDSSGRSSSESPGSSKEKKAKKPKHSRSRSVEKSQRSGKKASRKHKSKSRSR.

Over residues 74 to 88 the composition is skewed to polar residues; the sequence is PNNHGNFQGDSNFNR. Disordered regions lie at residues 74–331 and 382–805; these read PNNH…EEKE and LTGL…SRSR. Pro residues-rich tracts occupy residues 100–115 and 183–195; these read PPHP…PTPG and YWQP…PAPP. A compositionally biased stretch (basic and acidic residues) spans 197 to 210; the sequence is NRRERPSSFRDRQR. A phosphoserine mark is found at Ser-204 and Ser-211. A Glycyl lysine isopeptide (Lys-Gly) (interchain with G-Cter in SUMO2) cross-link involves residue Lys-218. The stretch at 237–276 forms a coiled coil; that stretch reads REGLEKMEREKQKKLEKERMEQQRSQLSKKEKKATEDAEG. A compositionally biased stretch (basic and acidic residues) spans 238 to 258; that stretch reads EGLEKMEREKQKKLEKERMEQ. 4 positions are modified to phosphoserine: Ser-290, Ser-304, Ser-313, and Ser-321. Residues 290 to 299 show a composition bias toward acidic residues; it reads SDEEEEDTEN. The span at 384–393 shows a compositional bias: gly residues; the sequence is GLGGLGGYGS. Basic and acidic residues predominate over residues 421-463; it reads QKQEAFWRKEKEQQLLHDKQMEEEKQQTERVTKEMNEFIHKEQ. Residues 429-461 adopt a coiled-coil conformation; sequence KEKEQQLLHDKQMEEEKQQTERVTKEMNEFIHK. 2 positions are modified to phosphoserine: Ser-465 and Ser-467. Composition is skewed to basic and acidic residues over residues 470–486 and 494–506; these read EARE…KRTP and EPKK…EKQG. Thr-485 bears the Phosphothreonine mark. Residue Lys-496 forms a Glycyl lysine isopeptide (Lys-Gly) (interchain with G-Cter in SUMO2) linkage. Over residues 508–550 the composition is skewed to low complexity; it reads SRSGSSSSGSSSSNSRTSSTSSTVSSSSYSSSSGSSRTSSRSS. 3 stretches are compositionally biased toward basic residues: residues 551 to 579, 587 to 598, and 607 to 639; these read SPKR…YSRR, ARVKIRDRRRSN, and RRNR…SRDR. Residues 659 to 721 are compositionally biased toward basic and acidic residues; it reads EAKEQERKKE…KRKRESERTF (63 aa). Residues 673-703 are a coiled coil; that stretch reads IDKDRKKKDKEREREQDKRKEKQKREEKDFK. A Glycyl lysine isopeptide (Lys-Gly) (interchain with G-Cter in SUMO2) cross-link involves residue Lys-703. The residue at position 726 (Ser-726) is a Phosphoserine. Positions 732–753 are enriched in basic and acidic residues; the sequence is IRHDSRQDSKKSTTKDSKKHSG. The span at 754–767 shows a compositional bias: low complexity; it reads SDSSGRSSSESPGS. Basic residues-rich tracts occupy residues 771-781 and 789-805; these read KKAKKPKHSRS and RSGK…SRSR.

It belongs to the splicing factor SR family. In terms of assembly, interacts with PNN. In terms of tissue distribution, expressed in heart, skeletal muscle, thymus, spleen, kidney, liver, placenta and leukocytes.

The protein resides in the nucleus speckle. The sequence is that of Arginine/serine-rich protein PNISR (PNISR) from Homo sapiens (Human).